The following is a 159-amino-acid chain: Ribosomal RNA large subunit methyltransferase H (159 aa).

Residues Leu76, Gly108, and 127–132 each bind S-adenosyl-L-methionine; that span reads FSKMTF.

The protein belongs to the RNA methyltransferase RlmH family. Homodimer.

It localises to the cytoplasm. The enzyme catalyses pseudouridine(1915) in 23S rRNA + S-adenosyl-L-methionine = N(3)-methylpseudouridine(1915) in 23S rRNA + S-adenosyl-L-homocysteine + H(+). Its function is as follows. Specifically methylates the pseudouridine at position 1915 (m3Psi1915) in 23S rRNA. This is Ribosomal RNA large subunit methyltransferase H from Staphylococcus saprophyticus subsp. saprophyticus (strain ATCC 15305 / DSM 20229 / NCIMB 8711 / NCTC 7292 / S-41).